We begin with the raw amino-acid sequence, 478 residues long: Alpha-1,3-mannosyl-glycoprotein 4-beta-N-acetylglucosaminyltransferase C (478 aa).

The Cytoplasmic segment spans residues 1–23; it reads MFKFHQVKHIFEILDKMRCLRKR. The chain crosses the membrane as a helical; Signal-anchor for type II membrane protein span at residues 24 to 44; the sequence is FTVSFLGVLVIFLLFMNLYIE. The Lumenal portion of the chain corresponds to 45–478; that stretch reads DSYVLEGDKQ…IIRSISIWTS (434 aa). N-linked (GlcNAc...) asparagine glycosylation is found at Asn-84, Asn-215, and Asn-348.

The protein belongs to the glycosyltransferase 54 family. A divalent metal cation serves as cofactor.

The protein resides in the golgi apparatus membrane. The catalysed reaction is N(4)-{beta-D-GlcNAc-(1-&gt;2)-alpha-D-Man-(1-&gt;3)-[beta-D-GlcNAc-(1-&gt;2)-alpha-D-Man-(1-&gt;6)]-beta-D-Man-(1-&gt;4)-beta-D-GlcNAc-(1-&gt;4)-beta-D-GlcNAc}-L-asparaginyl-[protein] + UDP-N-acetyl-alpha-D-glucosamine = N(4)-{beta-D-GlcNAc-(1-&gt;2)-[beta-D-GlcNAc-(1-&gt;4)]-alpha-D-Man-(1-&gt;3)-[beta-D-GlcNAc-(1-&gt;2)-alpha-D-Man-(1-&gt;6)]-beta-D-Man-(1-&gt;4)-beta-D-GlcNAc-(1-&gt;4)-beta-D-GlcNAc}-L-asparaginyl-[protein] + UDP + H(+). Its pathway is protein modification; protein glycosylation. In terms of biological role, glycosyltransferase that participates in the transfer of N-acetylglucosamine (GlcNAc) to the core mannose residues of N-linked glycans. Catalyzes the formation of the GlcNAcbeta1-4 branch on the GlcNAcbeta1-2Manalpha1-3 arm of the core structure of N-linked glycans. Essential for the production of tri- and tetra-antennary N-linked sugar chains. Does not catalyze the transfer of GlcNAc to the Manalpha1-6 arm to form GlcNAcBeta1-4Manalpha1-6 linkage ('GnT-VI' activity). This is Alpha-1,3-mannosyl-glycoprotein 4-beta-N-acetylglucosaminyltransferase C (MGAT4C) from Sus scrofa (Pig).